The primary structure comprises 102 residues: MAKQKIRIRLKAYEHRILDQSADKIVETAKRTGATISGPIPLPTERTLYTVLRSPHKYKDSREQFEMRTHKRLIDIVNPTPKTVDALMKLDLPSGVDIEIKL.

This sequence belongs to the universal ribosomal protein uS10 family. As to quaternary structure, part of the 30S ribosomal subunit.

In terms of biological role, involved in the binding of tRNA to the ribosomes. The chain is Small ribosomal subunit protein uS10 from Lacticaseibacillus casei (strain BL23) (Lactobacillus casei).